A 358-amino-acid chain; its full sequence is Molybdenum import ATP-binding protein ModC (358 aa).

An ABC transporter domain is found at 3–228 (INVKQKLGDL…LEMRPWLPAK (226 aa)). Residue 30-37 (GRSGAGKT) participates in ATP binding. One can recognise a Mop domain in the interval 289-356 (QTSIRNVLLA…IKGVSVTKDD (68 aa)).

The protein belongs to the ABC transporter superfamily. Molybdate importer (TC 3.A.1.8) family. As to quaternary structure, the complex is composed of two ATP-binding proteins (ModC), two transmembrane proteins (ModB) and a solute-binding protein (ModA).

The protein localises to the cell inner membrane. It catalyses the reaction molybdate(out) + ATP + H2O = molybdate(in) + ADP + phosphate + H(+). In terms of biological role, part of the ABC transporter complex ModABC involved in molybdenum import. Responsible for energy coupling to the transport system. This is Molybdenum import ATP-binding protein ModC from Photobacterium profundum (strain SS9).